Here is an 87-residue protein sequence, read N- to C-terminus: Prohibitin 1 (87 aa).

Thr8 is modified (phosphothreonine). Lys62 bears the N6-acetyllysine mark. Tyr83 is subject to Phosphotyrosine.

This sequence belongs to the prohibitin family. In terms of assembly, the mitochondrial prohibitin complex consists of two subunits (PHB1 and PHB2), assembled into a membrane-associated ring-shaped supercomplex of approximately 1 mDa. Interacts with STOML2. Interacts with MAP1LC3B (membrane-bound form LC3-II); the interaction requires PHB2 and takes place upon Parkin-mediated mitochondrial damage. Interacts with STAT3 (unphosphorylated or phosphorylated at 'Ser-727'). Interacts with CLPB. Interacts with CD86 (via cytoplasmic domain); the interactions increases after priming with CD40.

It is found in the mitochondrion inner membrane. The protein resides in the nucleus. The protein localises to the cytoplasm. It localises to the cell membrane. Protein with pleiotropic attributes mediated in a cell-compartment- and tissue-specific manner, which include the plasma membrane-associated cell signaling functions, mitochondrial chaperone, and transcriptional co-regulator of transcription factors in the nucleus. Plays a role in adipose tissue and glucose homeostasis in a sex-specific manner. Contributes to pulmonary vascular remodeling by accelerating proliferation of pulmonary arterial smooth muscle cells. In terms of biological role, in the mitochondria, together with PHB2, forms large ring complexes (prohibitin complexes) in the inner mitochondrial membrane (IMM) and functions as a chaperone protein that stabilizes mitochondrial respiratory enzymes and maintains mitochondrial integrity in the IMM, which is required for mitochondrial morphogenesis, neuronal survival, and normal lifespan. The prohibitin complex, with DNAJC19, regulates cardiolipin remodeling and the protein turnover of OMA1 in a cardiolipin-binding manner. Regulates mitochondrial respiration activity playing a role in cellular aging. The prohibitin complex plays a role of mitophagy receptor involved in targeting mitochondria for autophagic degradation. Involved in mitochondrial-mediated antiviral innate immunity, activates RIG-I-mediated signal transduction and production of IFNB1 and proinflammatory cytokine IL6. Its function is as follows. In the nucleus, acts as a transcription coregulator, enhances promoter binding by TP53, a transcription factor it activates, but reduces the promoter binding by E2F1, a transcription factor it represses. Interacts with STAT3 to affect IL17 secretion in T-helper Th17 cells. Functionally, in the plasma membrane, cooperates with CD86 to mediate CD86-signaling in B lymphocytes that regulates the level of IgG1 produced through the activation of distal signaling intermediates. Upon CD40 engagement, required to activate NF-kappa-B signaling pathway via phospholipase C and protein kinase C activation. The sequence is that of Prohibitin 1 (PHB1) from Mesocricetus auratus (Golden hamster).